We begin with the raw amino-acid sequence, 1035 residues long: Beta-galactosidase (1035 aa).

2 residues coordinate substrate: Asn101 and Asp199. Asp199 is a binding site for Na(+). Mg(2+) contacts are provided by Glu415, His417, and Glu460. Substrate contacts are provided by residues Glu460 and 540-543; that span reads EYAH. Glu460 (proton donor) is an active-site residue. Residue Glu540 is the Nucleophile of the active site. Asn600 is a binding site for Mg(2+). Positions 604 and 607 each coordinate Na(+). Positions 607 and 1011 each coordinate substrate.

Belongs to the glycosyl hydrolase 2 family. Homotetramer. Mg(2+) is required as a cofactor. Requires Na(+) as cofactor.

It catalyses the reaction Hydrolysis of terminal non-reducing beta-D-galactose residues in beta-D-galactosides.. The polypeptide is Beta-galactosidase (Psychromonas ingrahamii (strain DSM 17664 / CCUG 51855 / 37)).